The primary structure comprises 738 residues: Cleavage and polyadenylation specificity factor subunit 2 (738 aa).

It belongs to the metallo-beta-lactamase superfamily. RNA-metabolizing metallo-beta-lactamase-like family. CPSF2/YSH1 subfamily. In terms of assembly, CPSF is a heterotetramer composed of four distinct subunits 160, 100, 70 and 30 kDa.

The protein resides in the nucleus. CPSF plays a key role in pre-mRNA 3'-end formation, recognizing the AAUAAA signal sequence and interacting with poly(A)polymerase and other factors to bring about cleavage and poly(A) addition. The polypeptide is Cleavage and polyadenylation specificity factor subunit 2 (Oryza sativa subsp. japonica (Rice)).